Here is a 274-residue protein sequence, read N- to C-terminus: tRNA (mnm(5)s(2)U34)-methyltransferase, chloroplastic (274 aa).

A chloroplast-targeting transit peptide spans 1–50 (MAAGFFQAEMSILSSTLARSYSLPIRKTLMTFDFRIAMQRNPCLRIRRSC). Residues N108, N110, D134, Q136, and H166 each contribute to the S-adenosyl-L-methionine site.

Belongs to the methyltransferase superfamily. MnmM family.

The protein resides in the plastid. The protein localises to the chloroplast. It catalyses the reaction 5-aminomethyl-2-thiouridine(34) in tRNA + S-adenosyl-L-methionine = 5-methylaminomethyl-2-thiouridine(34) in tRNA + S-adenosyl-L-homocysteine + H(+). It functions in the pathway tRNA modification. In terms of biological role, involved in the biosynthesis of 5-methylaminomethyl-2-thiouridine (mnm(5)s(2)U) at the wobble position (U34) in tRNA. Catalyzes the transfer of a methyl group from S-adenosyl-L-methionine to nm(5)s(2)U34 to form mnm(5)s(2)U34. The sequence is that of tRNA (mnm(5)s(2)U34)-methyltransferase, chloroplastic from Arabidopsis thaliana (Mouse-ear cress).